Reading from the N-terminus, the 474-residue chain is PRAME family member 14 (474 aa).

LRR repeat units lie at residues 15–38 (QSLLRDQALSISAMEELPRVLYLP), 204–229 (LNSIQQLEIRNMSWPRLIRKLRCYLK), 271–294 (LLKIKLITFFSGHLEQLIRCLQNP), 319–342 (LGYLKHLNLSYVLLFRISLEPLGA), and 391–414 (MGALKDLLCHTSGLSKLSLETYPA).

This sequence belongs to the PRAME family.

The protein is PRAME family member 14 of Homo sapiens (Human).